Here is a 146-residue protein sequence, read N- to C-terminus: Angiogenin (146 aa).

The signal sequence occupies residues 1–24 (MVMGLGLFLLVFMLGLGLTSPTLA). Gln25 carries the post-translational modification Pyrrolidone carboxylic acid. His37 (proton acceptor) is an active-site residue. Arg45 serves as a coordination point for tRNA. 3 cysteine pairs are disulfide-bonded: Cys50–Cys105, Cys63–Cys116, and Cys81–Cys131. The short motif at 55–59 (RRQGM) is the Nucleolar localization signal element. Cys105 and Ile127 together coordinate tRNA. Catalysis depends on His138, which acts as the Proton donor.

The protein belongs to the pancreatic ribonuclease family. As to quaternary structure, homodimer. Interacts with RNH1; inhibiting ANG ribonuclease activity. Interacts with PCNA.

Its subcellular location is the secreted. It is found in the nucleus. The protein localises to the nucleolus. It localises to the cytoplasm. The protein resides in the stress granule. Its activity is regulated as follows. Has weak tRNA ribonuclease activity by itself due to partial autoinhibition by its C-terminus, which folds into a short alpha-helix that partially occludes the substrate-binding site. In absence of stress, the ribonuclease activity is inhibited by RNH1 in the cytoplasm. In response to stress, dissociates from RNH1 in the cytoplasm and associates with cytoplasmic ribosomes with vacant A-sites: ribosomes directly activate the tRNA ribonuclease activity of ANG by refolding the C-terminal alpha-helix. In response to stress, the angiogenic activity of ANG is inhibited by RNH1 in the nucleus. Functionally, secreted ribonuclease that can either promote or restrict cell proliferation of target cells, depending on the context. Endocytosed in target cells via its receptor PLXNB2 and translocates to the cytoplasm or nucleus. Under stress conditions, localizes to the cytoplasm and promotes the assembly of stress granules (SGs): specifically cleaves a subset of tRNAs within anticodon loops to produce tRNA-derived stress-induced fragments (tiRNAs), resulting in translation repression and inhibition of cell proliferation. tiRNas also prevent formation of apoptosome, thereby promoting cell survival. Preferentially cleaves RNAs between a pyrimidine and an adenosine residue, suggesting that it cleaves the anticodon loop of tRNA(Ala) (32-UUAGCAU-38) after positions 33 and 36. Cleaves a subset of tRNAs, including tRNA(Ala), tRNA(Glu), tRNA(Gly), tRNA(Lys), tRNA(Val), tRNA(His), tRNA(Asp) and tRNA(Sec). Under growth conditions and in differentiated cells, translocates to the nucleus and stimulates ribosomal RNA (rRNA) transcription, including that containing the initiation site sequences of 45S rRNA, thereby promoting cell growth and proliferation. Angiogenin induces vascularization of normal and malignant tissues via its ability to promote rRNA transcription. Involved in hematopoietic stem and progenitor cell (HSPC) growth and survival by promoting rRNA transcription in growth conditions and inhibiting translation in response to stress, respectively. Mediates the crosstalk between myeloid and intestinal epithelial cells to protect the intestinal epithelial barrier integrity: secreted by myeloid cells and promotes intestinal epithelial cells proliferation and survival. Also mediates osteoclast-endothelial cell crosstalk in growing bone: produced by osteoclasts and protects the neighboring vascular cells against senescence by promoting rRNA transcription. The protein is Angiogenin (ANG) of Miopithecus talapoin (Angolan talapoin).